The primary structure comprises 272 residues: 3-methyl-2-oxobutanoate hydroxymethyltransferase (272 aa).

Residues Asp-43 and Asp-82 each coordinate Mg(2+). 3-methyl-2-oxobutanoate is bound by residues 43–44 (DS), Asp-82, and Lys-112. Glu-114 serves as a coordination point for Mg(2+). Catalysis depends on Glu-179, which acts as the Proton acceptor.

Belongs to the PanB family. Homodecamer; pentamer of dimers. It depends on Mg(2+) as a cofactor.

It localises to the cytoplasm. The enzyme catalyses 3-methyl-2-oxobutanoate + (6R)-5,10-methylene-5,6,7,8-tetrahydrofolate + H2O = 2-dehydropantoate + (6S)-5,6,7,8-tetrahydrofolate. The protein operates within cofactor biosynthesis; (R)-pantothenate biosynthesis; (R)-pantoate from 3-methyl-2-oxobutanoate: step 1/2. Functionally, catalyzes the reversible reaction in which hydroxymethyl group from 5,10-methylenetetrahydrofolate is transferred onto alpha-ketoisovalerate to form ketopantoate. The chain is 3-methyl-2-oxobutanoate hydroxymethyltransferase from Staphylococcus aureus (strain MRSA252).